The following is a 215-amino-acid chain: uncharacterized protein (215 aa).

This is an uncharacterized protein from Haemophilus influenzae (strain ATCC 51907 / DSM 11121 / KW20 / Rd).